We begin with the raw amino-acid sequence, 429 residues long: Saccharopine dehydrogenase-like oxidoreductase (429 aa).

A2 is modified (N-acetylalanine). Residue S217 is modified to Phosphoserine.

This sequence belongs to the saccharopine dehydrogenase family.

The protein is Saccharopine dehydrogenase-like oxidoreductase (SCCPDH) of Homo sapiens (Human).